Reading from the N-terminus, the 261-residue chain is Eukaryotic translation initiation factor 3 subunit J-A (261 aa).

A compositionally biased stretch (low complexity) spans 1-11 (MAAAAAAAAAA). The interval 1-113 (MAAAAAAAAA…EPEESKVLTP (113 aa)) is disordered. A sufficient for interaction with EIF3B region spans residues 4–72 (AAAAAAAAGD…KEEAEVKPEV (69 aa)). 3 positions are modified to phosphoserine: Ser-14, Ser-16, and Ser-23. Positions 43–64 (EGEDEDEDVKDNWDDDDDENKE) are enriched in acidic residues. Over residues 65-109 (EAEVKPEVKISEKKKIAEKIKEKERQQKKRQEEIKKRLEEPEESK) the composition is skewed to basic and acidic residues. Residues 73-138 (KISEKKKIAE…ESDLELAKET (66 aa)) adopt a coiled-coil conformation. Residue Lys-109 forms a Glycyl lysine isopeptide (Lys-Gly) (interchain with G-Cter in SUMO2) linkage. At Thr-112 the chain carries Phosphothreonine. Phosphoserine is present on Ser-130. The tract at residues 246 to 261 (YGGYEGGYVQDYEDFM) is promotes stable association with the 40S ribosome. Residue Tyr-257 is modified to Phosphotyrosine.

This sequence belongs to the eIF-3 subunit J family. Component of the eukaryotic translation initiation factor 3 (eIF-3) complex, which is composed of 13 subunits: EIF3A, EIF3B, EIF3C, EIF3D, EIF3E, EIF3F, EIF3G, EIF3H, EIF3I, EIF3J, EIF3K, EIF3L and EIF3M. The eIF-3 complex appears to include 3 stable modules: module A is composed of EIF3A, EIF3B, EIF3G and EIF3I; module B is composed of EIF3F, EIF3H, and EIF3M; and module C is composed of EIF3C, EIF3D, EIF3E, EIF3K and EIF3L. EIF3C of module C binds EIF3B of module A and EIF3H of module B, thereby linking the three modules. EIF3J is a labile subunit that binds to the eIF-3 complex via EIF3B. The eIF-3 complex interacts with RPS6KB1 under conditions of nutrient depletion. Mitogenic stimulation leads to binding and activation of a complex composed of MTOR and RPTOR, leading to phosphorylation and release of RPS6KB1 and binding of EIF4B to eIF-3. Phosphorylated. Phosphorylation is enhanced upon serum stimulation.

The protein localises to the cytoplasm. Its function is as follows. Component of the eukaryotic translation initiation factor 3 (eIF-3) complex, which is required for several steps in the initiation of protein synthesis. The eIF-3 complex associates with the 40S ribosome and facilitates the recruitment of eIF-1, eIF-1A, eIF-2:GTP:methionyl-tRNAi and eIF-5 to form the 43S pre-initiation complex (43S PIC). The eIF-3 complex stimulates mRNA recruitment to the 43S PIC and scanning of the mRNA for AUG recognition. The eIF-3 complex is also required for disassembly and recycling of post-termination ribosomal complexes and subsequently prevents premature joining of the 40S and 60S ribosomal subunits prior to initiation. The eIF-3 complex specifically targets and initiates translation of a subset of mRNAs involved in cell proliferation, including cell cycling, differentiation and apoptosis, and uses different modes of RNA stem-loop binding to exert either translational activation or repression. This subunit binds directly within the mRNA entry channel of the 40S ribosome to the aminoacyl (A) site. It may regulate the interaction between the 43S PIC and mRNA. This chain is Eukaryotic translation initiation factor 3 subunit J-A (Eif3j1), found in Mus musculus (Mouse).